The following is a 172-amino-acid chain: Co-chaperone protein HscB (172 aa).

Residues 2–74 (DYFTLFGLPI…LKRAEYMLSL (73 aa)) form the J domain.

Belongs to the HscB family. As to quaternary structure, interacts with HscA and stimulates its ATPase activity. Interacts with IscU.

Its function is as follows. Co-chaperone involved in the maturation of iron-sulfur cluster-containing proteins. Seems to help targeting proteins to be folded toward HscA. The protein is Co-chaperone protein HscB of Pectobacterium atrosepticum (strain SCRI 1043 / ATCC BAA-672) (Erwinia carotovora subsp. atroseptica).